Consider the following 335-residue polypeptide: tRNA N6-adenosine threonylcarbamoyltransferase (335 aa).

Positions 111 and 115 each coordinate Fe cation. Substrate is bound by residues leucine 133 to glycine 137, aspartate 166, glycine 179, and asparagine 276. Aspartate 301 contributes to the Fe cation binding site.

It belongs to the KAE1 / TsaD family. It depends on Fe(2+) as a cofactor.

The protein resides in the cytoplasm. It carries out the reaction L-threonylcarbamoyladenylate + adenosine(37) in tRNA = N(6)-L-threonylcarbamoyladenosine(37) in tRNA + AMP + H(+). In terms of biological role, required for the formation of a threonylcarbamoyl group on adenosine at position 37 (t(6)A37) in tRNAs that read codons beginning with adenine. Is involved in the transfer of the threonylcarbamoyl moiety of threonylcarbamoyl-AMP (TC-AMP) to the N6 group of A37, together with TsaE and TsaB. TsaD likely plays a direct catalytic role in this reaction. The protein is tRNA N6-adenosine threonylcarbamoyltransferase of Wolbachia sp. subsp. Brugia malayi (strain TRS).